A 160-amino-acid chain; its full sequence is Nucleotide-binding protein VP1617 (160 aa).

Belongs to the YajQ family.

Functionally, nucleotide-binding protein. The polypeptide is Nucleotide-binding protein VP1617 (Vibrio parahaemolyticus serotype O3:K6 (strain RIMD 2210633)).